The following is a 593-amino-acid chain: MLLRWHSVIPLFLTMTVALPNTYRTVVEDLPAIPEGWVQGNPPSPETSVRMNLAVGQRNTRTFEQIVLDISTPGHRNYGKHLSRRDLKGLLRPRRETSNLILSWLEESGVPKRSIVDDGDWIHFVISISQAERMLQTRFYYFHDVQDPGISMIRTLKYSVPSRLARHVYMIQPTTKFGKPKKHANSVASLQVIYSSTNATENCNATITPRCLRELYKMGDYVAKPDCRNVIGISGYLDQYARYSDFYKFLELYAPEMKGANFSVAHIGNGQNLQNSTRNSIEASLDIEYALGLSNASAVFYTTSGRGPLVPDLDQPEQEHNSNEPYLDQLHYLLSLPQEALPAVLSTSYGENEQSVPERFSHATCNLFAQLGARGVSVIFSSGDSGVGSSCLTNGKKKITRFNPTFPASCPFVTSVGATFKINPERAIGFSSGGFSDRHSRPVYQNDAVQHYLDKLGDQWKGLYNPKGRGIPDVSAQGANFAIYDHGKVITVSGTSASAPAFAAIIANLNAIRLRANKPVLGYLNPFIYGKGREGFTDIVHGGSKGCVGYSSTNGSTPAVPYASWNATEGWDPVTGVGTPNFRILAKIVQHME.

Residues Met1–Ala18 form the signal peptide. Residues Leu19–Asn198 constitute a propeptide, removed in mature form. Residues Asn198, Asn204, Asn261, and Asn275 are each glycosylated (N-linked (GlcNAc...) asparagine). The 387-residue stretch at Thr206–Met592 folds into the Peptidase S53 domain. Catalysis depends on charge relay system residues Glu282 and Asp286. Asn295 carries an N-linked (GlcNAc...) asparagine glycan. Ser496 acts as the Charge relay system in catalysis. Ca(2+) contacts are provided by Asp538 and Ile539. 2 N-linked (GlcNAc...) asparagine glycosylation sites follow: Asn554 and Asn566. Residues Gly570 and Asp572 each coordinate Ca(2+).

The cofactor is Ca(2+).

The protein resides in the secreted. It localises to the extracellular space. The catalysed reaction is Release of an N-terminal tripeptide from a polypeptide.. Secreted tripeptidyl-peptidase which degrades proteins at acidic pHs and is involved in virulence. This chain is Probable tripeptidyl-peptidase SED3 (SED3), found in Trichophyton verrucosum (strain HKI 0517).